A 73-amino-acid polypeptide reads, in one-letter code: Protein WFDC10B (73 aa).

An N-terminal signal peptide occupies residues 1–21 (MAPQTLLLVLVLCVLLLQAQG). The WAP domain occupies 28-73 (RMQRIKVCEKRPSIDLCIHHCSYFQKCETNKICCSAFCGNICMSIL).

Ubiquitously expressed.

The protein resides in the secreted. The sequence is that of Protein WFDC10B (WFDC10B) from Homo sapiens (Human).